The following is a 487-amino-acid chain: Betaine aldehyde dehydrogenase (487 aa).

Isoleucine 27 and aspartate 93 together coordinate K(+). Residue 149-151 (GAW) coordinates NAD(+). Lysine 161 functions as the Charge relay system in the catalytic mechanism. Residues 175-178 (KPSE) and 228-231 (SVPT) each bind NAD(+). Leucine 243 is a K(+) binding site. Glutamate 249 acts as the Proton acceptor in catalysis. NAD(+)-binding residues include glycine 251, cysteine 283, and glutamate 384. Cysteine 283 functions as the Nucleophile in the catalytic mechanism. Cysteine 283 is modified (cysteine sulfenic acid (-SOH)). 2 residues coordinate K(+): lysine 454 and glycine 457. The active-site Charge relay system is glutamate 461.

Belongs to the aldehyde dehydrogenase family. Dimer of dimers. Requires K(+) as cofactor.

It catalyses the reaction betaine aldehyde + NAD(+) + H2O = glycine betaine + NADH + 2 H(+). It participates in amine and polyamine biosynthesis; betaine biosynthesis via choline pathway; betaine from betaine aldehyde: step 1/1. Functionally, involved in the biosynthesis of the osmoprotectant glycine betaine. Catalyzes the irreversible oxidation of betaine aldehyde to the corresponding acid. The protein is Betaine aldehyde dehydrogenase of Brucella melitensis biotype 2 (strain ATCC 23457).